A 421-amino-acid polypeptide reads, in one-letter code: Subtilisin-like protease 2 (421 aa).

The signal sequence occupies residues 1–16; that stretch reads MQLLNFGLLLLPFVAG. Residues 17 to 122 constitute a propeptide that is removed on maturation; sequence DLAPQPEPLL…VHPDQHVYLA (106 aa). Residues 36 to 122 form the Inhibitor I9 domain; the sequence is QYIVTLKEGL…VHPDQHVYLA (87 aa). A Peptidase S8 domain is found at 131–421; the sequence is RWGLGYMSSK…ERKFTLPKYF (291 aa). Residues Asp-169 and His-201 each act as charge relay system in the active site. N-linked (GlcNAc...) asparagine glycosylation is found at Asn-248, Asn-261, and Asn-348. Ser-357 acts as the Charge relay system in catalysis. Residue Asn-388 is glycosylated (N-linked (GlcNAc...) asparagine).

The protein belongs to the peptidase S8 family.

The protein resides in the secreted. Functionally, secreted subtilisin-like serine protease with keratinolytic activity that contributes to pathogenicity. This chain is Subtilisin-like protease 2 (SUB2), found in Trichophyton equinum (Horse ringworm fungus).